The chain runs to 138 residues: MLIPRKVKHRKQHHPRQRGIASGGTSVSFGDYGIQAMGHAYITNRQIESARIAINRHIKRGGKVWINIFPDRPLTKKPAETRMGSGKGSPEWWVANVKPGRVLFELSYPDEKIAREALTRAIHKLPIKARIVTREEQF.

Positions M1–Q17 are enriched in basic residues. The interval M1–G24 is disordered.

It belongs to the universal ribosomal protein uL16 family. As to quaternary structure, part of the 50S ribosomal subunit.

Binds 23S rRNA and is also seen to make contacts with the A and possibly P site tRNAs. The protein is Large ribosomal subunit protein uL16 of Mycolicibacterium gilvum (strain PYR-GCK) (Mycobacterium gilvum (strain PYR-GCK)).